A 304-amino-acid polypeptide reads, in one-letter code: Release factor glutamine methyltransferase (304 aa).

Residues D144 and N188 each contribute to the S-adenosyl-L-methionine site. Residue 188–191 (NPPY) participates in substrate binding.

Belongs to the protein N5-glutamine methyltransferase family. PrmC subfamily.

The catalysed reaction is L-glutaminyl-[peptide chain release factor] + S-adenosyl-L-methionine = N(5)-methyl-L-glutaminyl-[peptide chain release factor] + S-adenosyl-L-homocysteine + H(+). Methylates the class 1 translation termination release factors RF1/PrfA and RF2/PrfB on the glutamine residue of the universally conserved GGQ motif. This chain is Release factor glutamine methyltransferase, found in Mycobacterium tuberculosis (strain ATCC 25618 / H37Rv).